Consider the following 646-residue polypeptide: Phosphomethylpyrimidine synthase (646 aa).

Substrate-binding positions include N235, M264, Y293, H329, 349 to 351 (SRG), 390 to 393 (DGLR), and E429. H433 contacts Zn(2+). Y456 is a binding site for substrate. H497 lines the Zn(2+) pocket. [4Fe-4S] cluster is bound by residues C577, C580, and C585. Residues 624 to 646 (KSEEFRATGSELYHPAVHAEADE) are disordered.

The protein belongs to the ThiC family. Homodimer. The cofactor is [4Fe-4S] cluster.

The catalysed reaction is 5-amino-1-(5-phospho-beta-D-ribosyl)imidazole + S-adenosyl-L-methionine = 4-amino-2-methyl-5-(phosphooxymethyl)pyrimidine + CO + 5'-deoxyadenosine + formate + L-methionine + 3 H(+). It functions in the pathway cofactor biosynthesis; thiamine diphosphate biosynthesis. Catalyzes the synthesis of the hydroxymethylpyrimidine phosphate (HMP-P) moiety of thiamine from aminoimidazole ribotide (AIR) in a radical S-adenosyl-L-methionine (SAM)-dependent reaction. In Vibrio parahaemolyticus serotype O3:K6 (strain RIMD 2210633), this protein is Phosphomethylpyrimidine synthase.